The sequence spans 211 residues: SsrA-binding protein (211 aa).

Disordered stretches follow at residues 1–20 and 170–211; these read MHRR…PERS and RLRR…RHEN. The span at 177 to 187 shows a compositional bias: polar residues; it reads QRNTQRSVTPR.

It belongs to the SmpB family.

It is found in the cytoplasm. Required for rescue of stalled ribosomes mediated by trans-translation. Binds to transfer-messenger RNA (tmRNA), required for stable association of tmRNA with ribosomes. tmRNA and SmpB together mimic tRNA shape, replacing the anticodon stem-loop with SmpB. tmRNA is encoded by the ssrA gene; the 2 termini fold to resemble tRNA(Ala) and it encodes a 'tag peptide', a short internal open reading frame. During trans-translation Ala-aminoacylated tmRNA acts like a tRNA, entering the A-site of stalled ribosomes, displacing the stalled mRNA. The ribosome then switches to translate the ORF on the tmRNA; the nascent peptide is terminated with the 'tag peptide' encoded by the tmRNA and targeted for degradation. The ribosome is freed to recommence translation, which seems to be the essential function of trans-translation. This Tropheryma whipplei (strain TW08/27) (Whipple's bacillus) protein is SsrA-binding protein.